Reading from the N-terminus, the 511-residue chain is MKNNKIIIFDTTLRDGEQALGSSLGINQKLQIALALENLGVDVIEAGFPVSSQGDFKAVQKIASKVKNSTICALSRALDKDIDMAYEALKVAKHFRIHTFIATSTLHIQDKLKKDFDEILSMAKRAIIRARSYTDDVEFSCEDAGRTPIDNLCFMVENAIKAGAKTINIPDTVGYTLPSEFANIIKILFNKVPNIDKAIISVHCHNDLGMATGNSLSAILQGARQIECTINGLGERAGNCALEEVVMAIKTRKDYLQGFYTDIKCENISKTSKLVSAITNESIPSHKAIVGSNAFSHSSGIHQDGVLKNRQTYEIISPSAIGIHENRMLMTARSGRAMIKTCLENLGYDENTYNLDDVYERFLRLADKKGQVYDYDLEALMFLSYESEEENEFVLEKLSVISGNIPTACVCMRIKEELKTEACTGNGPVEAVFNCIARITNLKPVLKAYSINAKSSGVDAQGQVDVDLEFKGRKFHGKGLSTDVIEASAQAFVSAYNAIYRSLKVEERKMA.

A Pyruvate carboxyltransferase domain is found at 6–269 (IIIFDTTLRD…YTDIKCENIS (264 aa)). Mn(2+) contacts are provided by D15, H203, H205, and N239. The interval 394–511 (VLEKLSVISG…SLKVEERKMA (118 aa)) is regulatory domain.

It belongs to the alpha-IPM synthase/homocitrate synthase family. LeuA type 1 subfamily. As to quaternary structure, homodimer. The cofactor is Mn(2+).

It is found in the cytoplasm. The enzyme catalyses 3-methyl-2-oxobutanoate + acetyl-CoA + H2O = (2S)-2-isopropylmalate + CoA + H(+). It functions in the pathway amino-acid biosynthesis; L-leucine biosynthesis; L-leucine from 3-methyl-2-oxobutanoate: step 1/4. Its function is as follows. Catalyzes the condensation of the acetyl group of acetyl-CoA with 3-methyl-2-oxobutanoate (2-ketoisovalerate) to form 3-carboxy-3-hydroxy-4-methylpentanoate (2-isopropylmalate). This is 2-isopropylmalate synthase from Campylobacter jejuni subsp. doylei (strain ATCC BAA-1458 / RM4099 / 269.97).